The chain runs to 218 residues: Glutathione S-transferase class-mu 26 kDa isozyme (218 aa).

A GST N-terminal domain is found at 2–83 (SPILGYWKIK…YIADKHNMLG (82 aa)). Residues 7–8 (YW), 41–45 (WRNKK), 54–55 (NL), and 67–68 (QS) each bind glutathione. The 119-residue stretch at 85–203 (CPKERAEISM…KSSKYIAWPL (119 aa)) folds into the GST C-terminal domain. Residue tyrosine 111 coordinates substrate.

It belongs to the GST superfamily. Mu family. In terms of assembly, homodimer.

The enzyme catalyses RX + glutathione = an S-substituted glutathione + a halide anion + H(+). In terms of biological role, conjugation of reduced glutathione to a wide number of exogenous and endogenous hydrophobic electrophiles. GST isoenzymes appear to play a central role in the parasite detoxification system. Other functions are also suspected including a role in increasing the solubility of haematin in the parasite gut. This Schistosoma japonicum (Blood fluke) protein is Glutathione S-transferase class-mu 26 kDa isozyme.